We begin with the raw amino-acid sequence, 361 residues long: Chorismate synthase (361 aa).

NADP(+) is bound by residues Arg48 and Arg54. FMN-binding positions include 125–127, 238–239, Gly278, 293–297, and Arg319; these read RSS, NA, and KPTSS.

The protein belongs to the chorismate synthase family. In terms of assembly, homotetramer. Requires FMNH2 as cofactor.

It carries out the reaction 5-O-(1-carboxyvinyl)-3-phosphoshikimate = chorismate + phosphate. It functions in the pathway metabolic intermediate biosynthesis; chorismate biosynthesis; chorismate from D-erythrose 4-phosphate and phosphoenolpyruvate: step 7/7. Its function is as follows. Catalyzes the anti-1,4-elimination of the C-3 phosphate and the C-6 proR hydrogen from 5-enolpyruvylshikimate-3-phosphate (EPSP) to yield chorismate, which is the branch point compound that serves as the starting substrate for the three terminal pathways of aromatic amino acid biosynthesis. This reaction introduces a second double bond into the aromatic ring system. The polypeptide is Chorismate synthase (Photorhabdus laumondii subsp. laumondii (strain DSM 15139 / CIP 105565 / TT01) (Photorhabdus luminescens subsp. laumondii)).